The sequence spans 644 residues: Polyglycine hydrolase (644 aa).

The signal sequence occupies residues 1 to 23 (MYTSRSLFSTLASCLSLATLVAS). Residues N100, N144, N159, N244, and N340 are each glycosylated (N-linked (GlcNAc...) asparagine). An intrachain disulfide couples C149 to C183. Residue S369 is part of the active site. N389, N410, N443, and N486 each carry an N-linked (GlcNAc...) asparagine glycan.

Belongs to the peptidase S12 family.

The protein resides in the secreted. It catalyses the reaction a glycyl-glycyl-[protein] + H2O = N-terminal glycyl-[protein] + [protein]-C-terminal glycine. Its activity is regulated as follows. Not inhibited by phenylmethylsulfonyl fluoride (PMSF; serine peptidase class S1 inhibitor), clavulanic acid (beta-lactamase inhibitor) or ampicillin (penicillin-binding protein (PBP) inhibitor). Its function is as follows. Serine-type endopeptidase that cleaves Gly-Gly bonds in the polyglycine linker of host plant class IV chitinases to disrupt their chitin-binding, and thereby plays a role in lowering the defense responses of the host to the fungus. Degrades Z.mays Endochitinase A (CHIA). Has low proteolytic activity on Z.mays Endochitinase B (CHIB). The protein is Polyglycine hydrolase of Cochliobolus carbonum (strain 26-R-13) (Maize leaf spot fungus).